Reading from the N-terminus, the 299-residue chain is Oxygen-dependent coproporphyrinogen-III oxidase (299 aa).

Ser-92 serves as a coordination point for substrate. A divalent metal cation contacts are provided by His-96 and His-106. The active-site Proton donor is the His-106. 108–110 (NVR) contacts substrate. A divalent metal cation is bound by residues His-145 and His-175. Residues 240 to 275 (YVEFNLVWDRGTLFGLQTGGRTESILMSMPPLVRWE) form an important for dimerization region. 258 to 260 (GGR) is a substrate binding site.

This sequence belongs to the aerobic coproporphyrinogen-III oxidase family. Homodimer. Requires a divalent metal cation as cofactor.

The protein localises to the cytoplasm. The catalysed reaction is coproporphyrinogen III + O2 + 2 H(+) = protoporphyrinogen IX + 2 CO2 + 2 H2O. The protein operates within porphyrin-containing compound metabolism; protoporphyrin-IX biosynthesis; protoporphyrinogen-IX from coproporphyrinogen-III (O2 route): step 1/1. Its function is as follows. Involved in the heme biosynthesis. Catalyzes the aerobic oxidative decarboxylation of propionate groups of rings A and B of coproporphyrinogen-III to yield the vinyl groups in protoporphyrinogen-IX. The protein is Oxygen-dependent coproporphyrinogen-III oxidase of Salmonella enteritidis PT4 (strain P125109).